A 118-amino-acid chain; its full sequence is uncharacterized protein (118 aa).

Transmembrane regions (helical) follow at residues 7-27 (VIVKCEFFCIFTFIFGCFIIE) and 34-58 (VFVACCTIIKMGRCNMCIFITAIIF).

Its subcellular location is the membrane. This is an uncharacterized protein from Saccharomyces cerevisiae (strain ATCC 204508 / S288c) (Baker's yeast).